Here is a 272-residue protein sequence, read N- to C-terminus: Regulatory protein RecX (272 aa).

It belongs to the RecX family.

The protein localises to the cytoplasm. Modulates RecA activity. This chain is Regulatory protein RecX, found in Oceanobacillus iheyensis (strain DSM 14371 / CIP 107618 / JCM 11309 / KCTC 3954 / HTE831).